Here is a 215-residue protein sequence, read N- to C-terminus: RNA pyrophosphohydrolase (215 aa).

One can recognise a Nudix hydrolase domain in the interval 6–149 (GFRPNVGIIL…KRDVYQLALT (144 aa)). The Nudix box signature appears at 38-59 (GGIKYGETPMQAMYRELHEETG).

It belongs to the Nudix hydrolase family. RppH subfamily. Requires a divalent metal cation as cofactor.

Accelerates the degradation of transcripts by removing pyrophosphate from the 5'-end of triphosphorylated RNA, leading to a more labile monophosphorylated state that can stimulate subsequent ribonuclease cleavage. In Burkholderia vietnamiensis (strain G4 / LMG 22486) (Burkholderia cepacia (strain R1808)), this protein is RNA pyrophosphohydrolase.